Reading from the N-terminus, the 595-residue chain is 73 kDa paraflagellar rod protein (595 aa).

The interval 294-317 (DAEATKRHAANKEKSDRYIRENED) is disordered. Positions 317–337 (DRQEETWNKIQDLERQLQKLG) are calmodulin-binding.

As to quaternary structure, heterodimer of a 69 kDa and a 73 kDa protein.

It is found in the cell projection. Its subcellular location is the cilium. The protein localises to the flagellum. The protein resides in the cytoplasm. It localises to the cytoskeleton. In terms of biological role, major component of the paraflagellar rod (PFR). The PFR is a highly ordered lattices of fibrous proteins that are located inside the flagellum and assume a fixed orientation with respect to the microtubular axoneme. This is 73 kDa paraflagellar rod protein (PFRC) from Trypanosoma brucei brucei.